Reading from the N-terminus, the 104-residue chain is NADH-quinone oxidoreductase subunit K (104 aa).

The next 3 membrane-spanning stretches (helical) occupy residues V4–A24, V31–F51, and I64–L84.

Belongs to the complex I subunit 4L family. As to quaternary structure, NDH-1 is composed of 14 different subunits. Subunits NuoA, H, J, K, L, M, N constitute the membrane sector of the complex.

The protein resides in the cell membrane. The enzyme catalyses a quinone + NADH + 5 H(+)(in) = a quinol + NAD(+) + 4 H(+)(out). In terms of biological role, NDH-1 shuttles electrons from NADH, via FMN and iron-sulfur (Fe-S) centers, to quinones in the respiratory chain. The immediate electron acceptor for the enzyme in this species is believed to be a menaquinone. Couples the redox reaction to proton translocation (for every two electrons transferred, four hydrogen ions are translocated across the cytoplasmic membrane), and thus conserves the redox energy in a proton gradient. The polypeptide is NADH-quinone oxidoreductase subunit K (Geobacillus sp. (strain WCH70)).